A 119-amino-acid chain; its full sequence is UPF0212 protein Mlab_0931 (119 aa).

The protein belongs to the UPF0212 family.

The protein is UPF0212 protein Mlab_0931 of Methanocorpusculum labreanum (strain ATCC 43576 / DSM 4855 / Z).